Here is a 275-residue protein sequence, read N- to C-terminus: Bifunctional protein FolD (275 aa).

NADP(+)-binding positions include 161 to 163 (GRS), Ser186, and Thr227.

This sequence belongs to the tetrahydrofolate dehydrogenase/cyclohydrolase family. Homodimer.

The catalysed reaction is (6R)-5,10-methylene-5,6,7,8-tetrahydrofolate + NADP(+) = (6R)-5,10-methenyltetrahydrofolate + NADPH. It carries out the reaction (6R)-5,10-methenyltetrahydrofolate + H2O = (6R)-10-formyltetrahydrofolate + H(+). It functions in the pathway one-carbon metabolism; tetrahydrofolate interconversion. In terms of biological role, catalyzes the oxidation of 5,10-methylenetetrahydrofolate to 5,10-methenyltetrahydrofolate and then the hydrolysis of 5,10-methenyltetrahydrofolate to 10-formyltetrahydrofolate. The chain is Bifunctional protein FolD from Parafrankia sp. (strain EAN1pec).